A 343-amino-acid chain; its full sequence is Protein RecA (343 aa).

64 to 71 (GPESSGKT) contributes to the ATP binding site.

It belongs to the RecA family.

Its subcellular location is the cytoplasm. Can catalyze the hydrolysis of ATP in the presence of single-stranded DNA, the ATP-dependent uptake of single-stranded DNA by duplex DNA, and the ATP-dependent hybridization of homologous single-stranded DNAs. It interacts with LexA causing its activation and leading to its autocatalytic cleavage. This Cereibacter sphaeroides (strain ATCC 17023 / DSM 158 / JCM 6121 / CCUG 31486 / LMG 2827 / NBRC 12203 / NCIMB 8253 / ATH 2.4.1.) (Rhodobacter sphaeroides) protein is Protein RecA.